The chain runs to 842 residues: Cation/H(+) antiporter 20 (842 aa).

12 helical membrane passes run 26-46 (FPLL…LAVL), 55-75 (VIAE…RNMA), 86-106 (MPIL…LVGL), 122-142 (GIAV…AFVI), 155-175 (YAEF…PVLA), 193-213 (MAAA…AVAL), 228-248 (LVSL…LVVI), 283-303 (FATD…GLTI), 320-340 (FVSG…TDVA), 353-373 (LVVV…AVMV), 380-400 (ALTL…VLNI), and 413-433 (AILV…VMAI). Residues 585 to 595 (DHGHSHHHQDG) are compositionally biased toward basic and acidic residues. The tract at residues 585–605 (DHGHSHHHQDGGGDGNVPENV) is disordered.

Belongs to the monovalent cation:proton antiporter 2 (CPA2) transporter (TC 2.A.37) family. CHX (TC 2.A.37.4) subfamily. In terms of tissue distribution, expressed in leaves and stems. Preferentially expressed in guards cells.

The protein localises to the endomembrane system. Operates as a K(+)/H(+) antiporter that maintains K(+) homeostasis in guard cells and could regulate pH. Plays a critical role in osmoregulation through the control of stomates opening. The chain is Cation/H(+) antiporter 20 (CHX20) from Arabidopsis thaliana (Mouse-ear cress).